The following is a 333-amino-acid chain: Atrochrysone carboxyl ACP thioesterase MYCFIDRAFT_190111 (333 aa).

Zn(2+)-binding residues include histidine 108, histidine 110, aspartate 112, and histidine 113. Aspartate 112 serves as the catalytic Proton donor/acceptor.

Belongs to the metallo-beta-lactamase superfamily. Zn(2+) is required as a cofactor.

The catalysed reaction is atrochrysone carboxyl-[ACP] + H2O = atrochrysone carboxylate + holo-[ACP] + H(+). The protein operates within secondary metabolite biosynthesis. Functionally, atrochrysone carboxyl ACP thioesterase; part of the gene cluster that mediates the biosynthesis of an emodin derivative that may be involved in black Sigatoka disease of banana. The pathway begins with the synthesis of atrochrysone thioester by the polyketide synthase PKS8-1. The atrochrysone carboxyl ACP thioesterase MYCFIDRAFT_190111 then breaks the thioester bond and releases the atrochrysone carboxylic acid from PKS8-1. The decarboxylase MYCFIDRAFT_34057 then catalyzes the concerted decarboxylation-elimination required to convert atochrysone carboxylic acid into emodin anthrone, which is further oxidized to emodin by the anthrone oxygenase MYCFIDRAFT_34418. The functions of the other tailoring enzymes as well as the final product of the cluster have still to be identified. In Pseudocercospora fijiensis (strain CIRAD86) (Black leaf streak disease fungus), this protein is Atrochrysone carboxyl ACP thioesterase MYCFIDRAFT_190111.